The chain runs to 1427 residues: MNDLTKFTNQIAKPETFDQIQIGLASPERIRSWSFGEIKKPETINYRTFKPERDGLFCARIFGPVKDYECLCGKYKRMKYKGVVCEKCGVEVTVTKVRRERMGHIELAAPVAHIWFLKSLPSRIGLLLDMQLKQLERILYFESYVVIEPGLTPLEKYQLLTEDELLDAQDEYGEDAFSAGIGAEAVKHMLMNLDLVQEKEDLLQELATTKSELKPKKIIKRLKVVESFIDSGNRPEWMILDVVPVIPPELRPLVPLDGGRFATSDLNDLYRRVINRNNRLKRLIELRAPDIIVRNEKRMLQEAVDALFDNGRRGRVITGANKRPLKSLSDMLKGKQGRFRQNLLGKRVDYSGRSVIVTGPELKLHQCGLPKKMALELFKPFIYARLDAKGLSMTLKQAKKWVEKERKEVWDILDEVIREHPVMLNRAPTLHRLGIQAFEPVLIEGKAIQLHPLVCSAFNADFDGDQMAVHVPLSLEAQLEARVLMMSTNNILSPANGKPIIVPSQDMVLGIYYLSMDRAGEPGEGMMLADMAEVHQALEAKAVTLHSKIVARVPQTDEDGNQYLKRFETTPGRMLIGECLPKSHKVPFEIVNRLLTKKEIGDVIDQVYRHTGQKDTVLFADAIMALGFRHAFKAGISFGKDDMIIPDSKDALVAETKELVADYEQQYQDGLITQQEKYNKVIDAWSRCGDQVANAMMEELKSSPIDPETGRQKPINAIYMMSHSGARGSPAQMKQLAGMRGLMAKPSGEIIETPIISNFKEGLTVLEYFNSTHGARKGLADTALKTANSGYLTRRLVDVSQDCVVIEEDCGTERALEMRAIVQGGSTIASLGERILGRTLAEDLIEAKSGEVIAQKGELLDEAAIAKIEAAGVQSARIRSPLVCEATQGVCGKCYGRDLARGTPVNIGEAVGVIAAQSIGEPGTQLTMRTFHIGGAAQVNEQSHLEAISDGTVQYRDIPTITDKRGRRLSLARNGEIVVIDTEGRERAIHRVPYGTHLLHENGAIISQGDRLAEWDPFTTPVITEKPGIVRYQDLVDGKTLTEQTDEATGMSSRVVTENRAAGRGKKEDLRPRLTLLDENSGEAARYMMAPGTTLSVEDGQQVEAGDILARASREAAKTRDITGGLPRVAELFEARKPKDNSIIAKIAGRIEFVRDYKAKRKIAIIPEEGEPVEYLVPKSRVIDVQEGDYVKKGDNLISGSPDPHDILEVMGVEALAEYLVAEIQEVYRLQGVKINDKHIEVIVRQMLQKVEITNGGDTTLLPGEQVDLEEMLETNGKLEEGQQPAEGKPVLLGITKASLQTRSFISAASFQETTRVLTQAAVEGKKDSLIGLKENVIVGRLIPAGTGAGMNRMRVAASSRDAALRASYRKLQESLIAPATAAEEHAAELAQGPEAAIGDDPLATVEGETHGTDADAGDYLIEGDEA.

Positions 70, 72, 85, and 88 each coordinate Zn(2+). Mg(2+)-binding residues include D461, D463, and D465. Zn(2+) is bound by residues C810, C884, C891, and C894. 2 disordered regions span residues 1044–1065 and 1394–1427; these read QTDE…AGRG and PEAA…GDEA.

The protein belongs to the RNA polymerase beta' chain family. In terms of assembly, the RNAP catalytic core consists of 2 alpha, 1 beta, 1 beta' and 1 omega subunit. When a sigma factor is associated with the core the holoenzyme is formed, which can initiate transcription. Requires Mg(2+) as cofactor. Zn(2+) is required as a cofactor.

It catalyses the reaction RNA(n) + a ribonucleoside 5'-triphosphate = RNA(n+1) + diphosphate. Functionally, DNA-dependent RNA polymerase catalyzes the transcription of DNA into RNA using the four ribonucleoside triphosphates as substrates. The protein is DNA-directed RNA polymerase subunit beta' of Novosphingobium aromaticivorans (strain ATCC 700278 / DSM 12444 / CCUG 56034 / CIP 105152 / NBRC 16084 / F199).